Reading from the N-terminus, the 1363-residue chain is Vascular endothelial growth factor receptor 3 (1363 aa).

The first 24 residues, 1-24 (MQPGAALNRRLWLCLGLLQGLANG), serve as a signal peptide directing secretion. Over 25 to 775 (YSMTPPTLNI…EGSEDKGSME (751 aa)) the chain is Extracellular. Asn-33, Asn-104, Asn-166, Asn-251, Asn-299, and Asn-411 each carry an N-linked (GlcNAc...) asparagine glycan. 7 Ig-like C2-type domains span residues 44–118 (GDSL…YIKA), 151–213 (KDSM…WGDQ), 230–326 (YDIQ…TEVI), 331–415 (PFIS…ISLE), 422–552 (PHIH…FYVT), 555–671 (PDGF…KYLS), and 678–764 (PRLT…ASVA). 2 disulfides stabilise this stretch: Cys-51-Cys-111 and Cys-158-Cys-206. A disulfide bridge links Cys-252 with Cys-310. 3 disulfides stabilise this stretch: Cys-445/Cys-534, Cys-466/Cys-486, and Cys-578/Cys-653. N-linked (GlcNAc...) asparagine glycans are attached at residues Asn-515, Asn-527, Asn-582, Asn-594, and Asn-683. A disulfide bridge connects residues Cys-699 and Cys-751. N-linked (GlcNAc...) asparagine glycosylation is present at Asn-758. A helical transmembrane segment spans residues 776 to 796 (IVILIGTGVIAVFFWVLLLLI). The Cytoplasmic segment spans residues 797–1363 (FCNMKRPAHA…GSTFFADSNY (567 aa)). Residues Tyr-830 and Tyr-833 each carry the phosphotyrosine; by SRC modification. The region spanning 845–1173 (LHLGRVLGHG…DLVEILGDLL (329 aa)) is the Protein kinase domain. ATP is bound by residues 851-859 (LGHGAFGKV) and Lys-879. Catalysis depends on Asp-1037, which acts as the Proton acceptor. Position 1063 is a phosphotyrosine; by autocatalysis and SRC (Tyr-1063). 4 positions are modified to phosphotyrosine; by autocatalysis: Tyr-1068, Tyr-1230, Tyr-1231, and Tyr-1265. Basic and acidic residues predominate over residues 1289-1317 (SRHRQEGSFSRKDPGQHMDISRGHPDLQG). Residues 1289-1330 (SRHRQEGSFSRKDPGQHMDISRGHPDLQGRRRRPTQGAQGGK) are disordered. Phosphotyrosine; by autocatalysis and SRC occurs at positions 1333 and 1337. Tyr-1363 carries the post-translational modification Phosphotyrosine; by autocatalysis.

It belongs to the protein kinase superfamily. Tyr protein kinase family. CSF-1/PDGF receptor subfamily. As to quaternary structure, interacts with VEGFC and VEGFD. Monomer in the absence of bound VEGFC or VEGFD. Homodimer in the presence of bound VEGFC or VEGFD. Can also form a heterodimer with KDR. Interacts with PTPN14; the interaction is enhanced by stimulation with VEGFC. Interacts with CRK, GRB2, PTK2/FAK1, SHC1, PIK3R1 and PTPN11/SHP-2. Identified in a complex with SRC and ITGB1. Identified in a complex with SRC and ITGB1. Autophosphorylated on tyrosine residues upon ligand binding. Autophosphorylation occurs in trans, i.e. one subunit of the dimeric receptor phosphorylates tyrosine residues on the other subunit. Phosphorylation in response to H(2)O(2) is mediated by a process that requires SRC and PRKCD activity. Phosphorylation at Tyr-1068 is required for autophosphorylation at additional tyrosine residues. Phosphorylation at Tyr-1063 and Tyr-1337 is important for interaction with CRK and subsequent activation of MAPK8. Phosphorylation at Tyr-1230, Tyr-1231 and Tyr-1337 is important for interaction with GRB2 and subsequent activation of the AKT1 and MAPK1/ERK2 and/or MAPK3/ERK1 signaling pathways. In response to endothelial cell adhesion onto collagen, can also be phosphorylated in the absence of FLT4 kinase activity by SRC.

The protein localises to the cell membrane. It is found in the cytoplasm. It localises to the nucleus. It catalyses the reaction L-tyrosyl-[protein] + ATP = O-phospho-L-tyrosyl-[protein] + ADP + H(+). Present in an inactive conformation in the absence of bound ligand. Binding of VEGFC or VEGFD leads to dimerization and activation by autophosphorylation on tyrosine residues. Tyrosine-protein kinase that acts as a cell-surface receptor for VEGFC and VEGFD, and plays an essential role in adult lymphangiogenesis and in the development of the vascular network and the cardiovascular system during embryonic development. Promotes proliferation, survival and migration of endothelial cells, and regulates angiogenic sprouting. Signaling by activated FLT4 leads to enhanced production of VEGFC, and to a lesser degree VEGFA, thereby creating a positive feedback loop that enhances FLT4 signaling. Modulates KDR signaling by forming heterodimers. Mediates activation of the MAPK1/ERK2, MAPK3/ERK1 signaling pathway, of MAPK8 and the JUN signaling pathway, and of the AKT1 signaling pathway. Phosphorylates SHC1. Mediates phosphorylation of PIK3R1, the regulatory subunit of phosphatidylinositol 3-kinase. Promotes phosphorylation of MAPK8 at 'Thr-183' and 'Tyr-185', and of AKT1 at 'Ser-473'. This chain is Vascular endothelial growth factor receptor 3 (Flt4), found in Rattus norvegicus (Rat).